Consider the following 160-residue polypeptide: Cytochrome b6-f complex subunit 4 (160 aa).

3 helical membrane-spanning segments follow: residues 36–56, 95–115, and 131–151; these read LLYI…GLAI, LLGV…PFLE, and TVFL…TLPI.

Belongs to the cytochrome b family. PetD subfamily. As to quaternary structure, the 4 large subunits of the cytochrome b6-f complex are cytochrome b6, subunit IV (17 kDa polypeptide, petD), cytochrome f and the Rieske protein, while the 4 small subunits are petG, petL, petM and petN. The complex functions as a dimer.

It is found in the plastid. It localises to the chloroplast thylakoid membrane. Its function is as follows. Component of the cytochrome b6-f complex, which mediates electron transfer between photosystem II (PSII) and photosystem I (PSI), cyclic electron flow around PSI, and state transitions. This Oenothera elata subsp. hookeri (Hooker's evening primrose) protein is Cytochrome b6-f complex subunit 4.